Reading from the N-terminus, the 109-residue chain is Large ribosomal subunit protein uL24 (109 aa).

This sequence belongs to the universal ribosomal protein uL24 family. In terms of assembly, part of the 50S ribosomal subunit.

Its function is as follows. One of two assembly initiator proteins, it binds directly to the 5'-end of the 23S rRNA, where it nucleates assembly of the 50S subunit. One of the proteins that surrounds the polypeptide exit tunnel on the outside of the subunit. The protein is Large ribosomal subunit protein uL24 of Ehrlichia chaffeensis (strain ATCC CRL-10679 / Arkansas).